Reading from the N-terminus, the 205-residue chain is UPF0056 membrane protein MJ1677 (205 aa).

A run of 6 helical transmembrane segments spans residues isoleucine 7 to isoleucine 27, alanine 49 to isoleucine 69, serine 70 to valine 90, isoleucine 112 to methionine 132, phenylalanine 145 to alanine 165, and glycine 185 to leucine 205.

The protein belongs to the UPF0056 (MarC) family.

The protein localises to the cell membrane. The sequence is that of UPF0056 membrane protein MJ1677 from Methanocaldococcus jannaschii (strain ATCC 43067 / DSM 2661 / JAL-1 / JCM 10045 / NBRC 100440) (Methanococcus jannaschii).